A 2100-amino-acid chain; its full sequence is MATLPSAERRAFALKINRYSSSEIRKQFTLPPNLGQYHRHSISTSGFPSLQLPQLYEPVEPVDFEGLVMTHLNSLDAELAQELGDLTDDDLHVAFTPKECRTLQHSLPEEGVELDPHVRDCVQTYIREWLIVNRKNQGSSEFCSFKKTGSRRDFQKTLQKQTFESETLECSEPDTQTGPRHPLNVLCDVSGKGPLTSCDFDLRSLQPDERLENLLQLVSAEDFEKEKEEARKTNRPAELFALYPPVDEEDAVEIRPVPECPKEHLGNRILVKVLTLKFEIEIEPLFASIALYDVKERKKISENFHCDLNSDQFKGFLRAHTPSIDPSSQARSAVFSVTYPSSDIYLVVKIEKVLQQGEIADCAEPYMIIKESDGGKSKEKVEKLKLQAESFCQRLGKYRMPFAWAPISLASFFNISTLERESTDVEPGVGRNSVGEKRSLSQSRRPSERTLSLEENGVGSNFKATTLATNIFFKQEGDRLSDEDLFKFLADYKRSSSLQRRVKSIPGSLRLEISPAPDVMNCCLTPEMLPVKPFPENRTRPHKEILEFPIREVYVPHTVYRNLLYVYPQRLNFASKLASARNITIKIQFMCGEDPSNAMPVIFGKSSGPEFLQEVYTAITYHNKSPDFYEEVKIKLPAKLTVNHHLLFTFYHISCQQKQGASGESLLGYSWLPILLNERLQTGSYCLPVALEKLPPNYSIHSAEKVPLQNPPIKWAEGHKGVFNIEVQAVSSVHTQDNHLEKFFTLCHSLESQVSFPIRVLDQKITESTLEHELKLSIICLNSSRLEPLVLFLHLVLDKLFQLSVQPMVIAGQTANFSQFAFESVVAIANSLHNSKDLRKDQHGRNCLLASYVHYVFRLPELHRDTSKSGGPTTVVPDPRYHTYGRTSAAAVSSKLMQARVMSSSNPDLTGSHCAADEEVKNIMSSKIADRNCSRMSYYCSGNSDAPGSTAAPRPVSKKHFHEELALQMVVSTGVVRETVFKYAWFFFELLVKSMAQYVHNLDKRDSFRRTRFSDRFKDDITTIVNVVTSEIAALLVKPQKESEQAEKINISLAFFLYDLLSIMDRGFVFNLIKHYCSQLSAKLNILPTLISMRLEFLRILCSHEHYLNLNLLFMNTDTAPASPCPSISSQNSSSCSSFQDQKIASMFDLTPEYRQQHFLTGLLFTELAVALDAEGDGISRVQRKAVSAIHSLLCSHDLDPRCRKPEVKVKIAALYLPLVGIILDALPQLYDFTDARSGRSRASGSYEEQDVANGINQNVALAIAGNHFNLKTSGAMLSSLPYKQYNMLNADTTRHLMICFLWIMKNADQSLIRKWIADLPSMQLNRILDLLFICVSCFEYKGKQSSDKVSNQVLQKSRDVKAKLEEALLRGEGARGEMMRRRIPGTDRFPGINENLRWRKEQTQWRQANEKLDKTKAELDQEALISGNLATEANLIILDMQENIIQASSALDCKDSLLGGVLRVLVNSLSCDQSTTYLTHCFATLRALIAKFGDLLFEEEMEQCADLCQRVLHHCSSSMDVTRSQACATLYLLMRFSFGATSNFARVKMQVTMALASLVGKAPDFNEEHLRRSLRTILAYSEEDTAMQTTPFPMQVEELLCNLNSILYDTVKMREFQEDPEMLMDLMYRIAKSYQASPDLRLTWLQNMAEKHTKKKCFTEAAMCLVHAAALVAEYLSMLEDHSYLPVGSVSFQNISSNVLEESAVSDDTLSPDEDGVCSGRYFTESGLVGLLEQAAELFSTGGLYETVNEVYKLVIPILEAHRDFRKLTSTHDKLQKAFDNIINKDHKRMFGTYFRVGFYGSRFGDLDEQEFVYKEPAITKLPEISHRLEGFYGQCFGAEFVEVIKDSTPVDKTKLDPNKAYIQITFVEPYFDEYEMKDRVTYFEKNFNLRRFMYTTPFTLEGRPRGELHEQHRRNTVLTTMHAFPYIKTRIRVSQKEEFVLTPIEVAIEDMKKKTLQLAVATHQEPPDAKMLQMVLQGSVGATVNQGPLEVAQVFLAEIPADPKLYRHHNKLRLCFKEFIMRCGEAVEKNRRLITAEQREYQQELKKNYNKLRDSLRPMIERKIPELYKPIFRVDSQKRDSFHRSSFRKCETQLSQGS.

Phosphoserine is present on residues S20, S139, and S452. Residues 424 to 453 (DVEPGVGRNSVGEKRSLSQSRRPSERTLSL) form a disordered region. Basic and acidic residues predominate over residues 434 to 452 (VGEKRSLSQSRRPSERTLS). A C2 DOCK-type domain is found at 561–730 (RNLLYVYPQR…GVFNIEVQAV (170 aa)). Phosphoserine occurs at positions 905, 937, 1146, and 1244. The DOCKER domain occupies 1633–2067 (KSYQASPDLR…LRPMIERKIP (435 aa)). Position 2088 is a phosphoserine (S2088).

The protein belongs to the DOCK family. In terms of assembly, interacts (via DOCKER domain) with GTPase CDC42; the interaction activates CDC42 by exchanging GDP for GTP. The unphosphorylated form interacts (via DOCKER domain) with LRCH1 (via LRR repeats); the interaction prevents the association between DOCK8 and CDC42. Interacts with CCDC88B. In terms of processing, in response to chemokine CXCL12/SDF-1-alpha stimulation, phosphorylated by PRKCA/PKC-alpha which promotes DOCK8 dissociation from LRCH1. Expressed in T cells. Expressed in bone marrow-derived dendritic cells.

It localises to the cytoplasm. It is found in the cell membrane. Its subcellular location is the cell projection. The protein resides in the lamellipodium membrane. Its function is as follows. Guanine nucleotide exchange factor (GEF) which specifically activates small GTPase CDC42 by exchanging bound GDP for free GTP. During immune responses, required for interstitial dendritic cell (DC) migration by locally activating CDC42 at the leading edge membrane of DC. Required for CD4(+) T-cell migration in response to chemokine stimulation by promoting CDC42 activation at T cell leading edge membrane. Is involved in NK cell cytotoxicity controlling polarization of microtubule-organizing center (MTOC), and possibly regulating CCDC88B-mediated lytic granule transport to MTOC during cell killing. The chain is Dedicator of cytokinesis protein 8 (Dock8) from Mus musculus (Mouse).